The primary structure comprises 164 residues: F-box protein At4g05010 (164 aa).

Residues 38 to 57 (SKRAPENDSPPVKRPSHETT) form a disordered region. The F-box domain maps to 61–109 (RSLLETLHQDILIRVLCHVDHEDLATLKRVSKTIRKAVIEAKKSHFDYS).

The sequence is that of F-box protein At4g05010 from Arabidopsis thaliana (Mouse-ear cress).